The following is a 296-amino-acid chain: Ribonuclease HIII (296 aa).

The RNase H type-2 domain occupies 80 to 296 (LALIGSDEVG…NTKKAYQRLK (217 aa)). 3 residues coordinate a divalent metal cation: aspartate 86, glutamate 87, and aspartate 191.

This sequence belongs to the RNase HII family. RnhC subfamily. Requires Mn(2+) as cofactor. Mg(2+) serves as cofactor.

Its subcellular location is the cytoplasm. The catalysed reaction is Endonucleolytic cleavage to 5'-phosphomonoester.. Functionally, endonuclease that specifically degrades the RNA of RNA-DNA hybrids. The chain is Ribonuclease HIII from Streptococcus thermophilus (strain CNRZ 1066).